A 173-amino-acid polypeptide reads, in one-letter code: Putative metal-dependent hydrolase BT9727_2476 (173 aa).

Zn(2+) contacts are provided by H65, H156, and H160.

It belongs to the metal hydrolase YfiT family. As to quaternary structure, homodimer. Zn(2+) is required as a cofactor.

The protein resides in the cytoplasm. Functionally, possible metal-dependent hydrolase. This is Putative metal-dependent hydrolase BT9727_2476 from Bacillus thuringiensis subsp. konkukian (strain 97-27).